A 360-amino-acid chain; its full sequence is UDP-3-O-acylglucosamine N-acyltransferase (360 aa).

The Proton acceptor role is filled by histidine 256. Positions 341 to 360 are disordered; the sequence is EGSGAETAARPDDDRDEGRG. Basic and acidic residues predominate over residues 349-360; the sequence is ARPDDDRDEGRG.

Belongs to the transferase hexapeptide repeat family. LpxD subfamily. Homotrimer.

It catalyses the reaction a UDP-3-O-[(3R)-3-hydroxyacyl]-alpha-D-glucosamine + a (3R)-hydroxyacyl-[ACP] = a UDP-2-N,3-O-bis[(3R)-3-hydroxyacyl]-alpha-D-glucosamine + holo-[ACP] + H(+). It functions in the pathway bacterial outer membrane biogenesis; LPS lipid A biosynthesis. Its function is as follows. Catalyzes the N-acylation of UDP-3-O-acylglucosamine using 3-hydroxyacyl-ACP as the acyl donor. Is involved in the biosynthesis of lipid A, a phosphorylated glycolipid that anchors the lipopolysaccharide to the outer membrane of the cell. The chain is UDP-3-O-acylglucosamine N-acyltransferase from Rhodopseudomonas palustris (strain ATCC BAA-98 / CGA009).